The sequence spans 968 residues: Protein translocase subunit SecA (968 aa).

ATP-binding positions include Gln99, 117–121, and Asp631; that span reads GEGKT.

The protein belongs to the SecA family. Monomer and homodimer. Part of the essential Sec protein translocation apparatus which comprises SecA, SecYEG and auxiliary proteins SecDF. Other proteins may also be involved.

It is found in the cell inner membrane. The protein localises to the cytoplasm. It catalyses the reaction ATP + H2O + cellular proteinSide 1 = ADP + phosphate + cellular proteinSide 2.. Functionally, part of the Sec protein translocase complex. Interacts with the SecYEG preprotein conducting channel. Has a central role in coupling the hydrolysis of ATP to the transfer of proteins into and across the cell membrane, serving as an ATP-driven molecular motor driving the stepwise translocation of polypeptide chains across the membrane. In Chlamydia muridarum (strain MoPn / Nigg), this protein is Protein translocase subunit SecA.